We begin with the raw amino-acid sequence, 94 residues long: Small ribosomal subunit protein uS19 (94 aa).

It belongs to the universal ribosomal protein uS19 family.

Protein S19 forms a complex with S13 that binds strongly to the 16S ribosomal RNA. The protein is Small ribosomal subunit protein uS19 of Caldicellulosiruptor saccharolyticus (strain ATCC 43494 / DSM 8903 / Tp8T 6331).